A 422-amino-acid chain; its full sequence is Enolase (422 aa).

Gln-163 contributes to the (2R)-2-phosphoglycerate binding site. Glu-205 serves as the catalytic Proton donor. Asp-242, Glu-283, and Asp-310 together coordinate Mg(2+). Residues Lys-335, Arg-364, Ser-365, and Lys-386 each contribute to the (2R)-2-phosphoglycerate site. The active-site Proton acceptor is Lys-335.

This sequence belongs to the enolase family. It depends on Mg(2+) as a cofactor.

The protein localises to the cytoplasm. It is found in the secreted. It localises to the cell surface. The enzyme catalyses (2R)-2-phosphoglycerate = phosphoenolpyruvate + H2O. It participates in carbohydrate degradation; glycolysis; pyruvate from D-glyceraldehyde 3-phosphate: step 4/5. Catalyzes the reversible conversion of 2-phosphoglycerate (2-PG) into phosphoenolpyruvate (PEP). It is essential for the degradation of carbohydrates via glycolysis. The polypeptide is Enolase (Bdellovibrio bacteriovorus (strain ATCC 15356 / DSM 50701 / NCIMB 9529 / HD100)).